Consider the following 607-residue polypeptide: Albumin (607 aa).

The first 18 residues, 1 to 18 (MKWVTFVSLLFLFSSAYF), serve as a signal peptide directing secretion. Residues 19-24 (RGVLRR) constitute a propeptide that is removed on maturation. Albumin domains follow at residues 19 to 209 (RGVL…DALK), 210 to 402 (ERIL…QFTP), and 403 to 600 (LVEE…KLVA). Residue His-27 participates in Cu cation binding. A Phosphoserine modification is found at Ser-29. Residues Glu-30 and Asp-37 each contribute to the Ca(2+) site. A disulfide bridge connects residues Cys-77 and Cys-86. Phosphoserine is present on residues Ser-82 and Ser-89. His-91 contributes to the Zn(2+) binding site. Disulfide bonds link Cys-99-Cys-115, Cys-114-Cys-125, Cys-147-Cys-192, Cys-191-Cys-200, Cys-223-Cys-269, and Cys-268-Cys-276. Thr-107 carries the phosphothreonine modification. An N6-succinyllysine modification is found at Lys-228. Glu-267 serves as a coordination point for Ca(2+). Residues His-270 and Asp-272 each coordinate Zn(2+). Ca(2+)-binding residues include Asp-272, Glu-275, Asp-278, and Asp-282. Disulfide bonds link Cys-288–Cys-302, Cys-301–Cys-312, Cys-339–Cys-384, Cys-383–Cys-392, Cys-415–Cys-461, Cys-460–Cys-471, Cys-484–Cys-500, and Cys-499–Cys-510. Ser-442 is subject to Phosphoserine. 2 positions are modified to phosphothreonine: Thr-443 and Thr-445. Phosphoserine is present on Ser-512. 2 cysteine pairs are disulfide-bonded: Cys-537–Cys-582 and Cys-581–Cys-590. Lys-557 is subject to N6-methyllysine. The residue at position 569 (Thr-569) is a Phosphothreonine. An N6-succinyllysine modification is found at Lys-587.

It belongs to the ALB/AFP/VDB family. Interacts with FCGRT; this interaction regulates ALB homeostasis. Interacts with TASOR. In plasma, occurs in a covalently-linked complex with chromophore-bound alpha-1-microglobulin; this interaction does not prevent fatty acid binding to ALB. In terms of processing, phosphorylated by FAM20C in the extracellular medium. In terms of tissue distribution, plasma.

It is found in the secreted. Functionally, binds water, Ca(2+), Na(+), K(+), fatty acids, hormones, bilirubin and drugs. Its main function is the regulation of the colloidal osmotic pressure of blood. Major zinc transporter in plasma, typically binds about 80% of all plasma zinc. Major calcium and magnesium transporter in plasma, binds approximately 45% of circulating calcium and magnesium in plasma. Potentially has more than two calcium-binding sites and might additionally bind calcium in a non-specific manner. The shared binding site between zinc and calcium at residue Asp-272 suggests a crosstalk between zinc and calcium transport in the blood. The rank order of affinity is zinc &gt; calcium &gt; magnesium. Binds to the bacterial siderophore enterobactin and inhibits enterobactin-mediated iron uptake of E.coli from ferric transferrin, and may thereby limit the utilization of iron and growth of enteric bacteria such as E.coli. Does not prevent iron uptake by the bacterial siderophore aerobactin. This Equus asinus (Donkey) protein is Albumin (ALB).